The sequence spans 241 residues: Proteasome subunit alpha (241 aa).

Belongs to the peptidase T1A family. The 20S proteasome core is composed of 14 alpha and 14 beta subunits that assemble into four stacked heptameric rings, resulting in a barrel-shaped structure. The two inner rings, each composed of seven catalytic beta subunits, are sandwiched by two outer rings, each composed of seven alpha subunits. The catalytic chamber with the active sites is on the inside of the barrel. Has a gated structure, the ends of the cylinder being occluded by the N-termini of the alpha-subunits. Is capped by the proteasome-associated ATPase, ARC.

The protein localises to the cytoplasm. It participates in protein degradation; proteasomal Pup-dependent pathway. The formation of the proteasomal ATPase ARC-20S proteasome complex, likely via the docking of the C-termini of ARC into the intersubunit pockets in the alpha-rings, may trigger opening of the gate for substrate entry. Interconversion between the open-gate and close-gate conformations leads to a dynamic regulation of the 20S proteasome proteolysis activity. Functionally, component of the proteasome core, a large protease complex with broad specificity involved in protein degradation. This chain is Proteasome subunit alpha, found in Frankia alni (strain DSM 45986 / CECT 9034 / ACN14a).